Consider the following 1071-residue polypeptide: MPKREDIKKVLLIGSGPITIGQAAEFDFSGSQACRSLKEEGIKVVLVNSNPATIMTDPEMADSVYIEPLDAKIVEKIIEKERPDGIIAGIGGQTGLNITSELAEKGVFEKYGVEILGTPVEAIKNTEDRELFKETMLRIGEKVPLSRAVNSLKEAEDVVDELGLPLIVRPAYTLGGAGGGIARTKEELLEITERGLRRSRINQVLIEESVLGWAEIEYEVMRDENDTCIVICNMENIDPMGVHTGESAVVAPSQTLSDAEHQMLRSASIKIIRALKIEGGCNIQYALKEGDYRVVEVNPRVSRSSALASKATGYPIARVTAKIAIGMKLDEIINNVTKSTPASFEPALDYVITKIPRWPFDKFTTADKTLTTAMKSTGEVMAIGRTIEESLLKAFKSLDIDNQLGNKHWDEPETKTLLKTPTSERLFVIFDALEKGMSVKEIFELSSINPFFISKIKRIVDMEKRIRAEELTPELLREAKKMGFPDTRLAELTGSTRQEISDLRHKAGILATFKMVDTCAAEFEAATPYYYSTYEDSCETNATTDKKKILILGAGPIRIGQGIEFDYCTVHAVTALREEGIETHIINNNPETVSTDFDTSDKLFFEPLTLEYVMNVIEREKPDGVLVQFGGQTSVNLAIPLKQELKRRTDLNTVILGTDPDDMDLAEDREKFYILMKELGVPQPEGGYATSHKEAIEVAKRIGFPVLVRPSYVLGGRAMEIVYDEIDLERYMKEAVRVSHEHPILIDDFLEAASEIDVDAVCDQKDVIIGAIMEHIEEAGVHSGDSACVIPPQSLSPEVLDQVRDYTRKIALALKVKGLINIQMAEKCGKVYVLEANPRSSRTIPFVSKSVGIPLAKIAAKVIAGHSLKSLGYTDEPKPKHVSIKEVLLPFDKLPGADPVLGPEMKSTGEVMGIDYDFGRAYYKAELAADNVLPLTGKVFLSIRNADKTELVDVAKKLQAAGLELMGTEGTVNYLARHGVFMDVVKKVHDGSPNVIDMMRRDEVDLIINTPTSKQSRRDGSRIRRAAVDFKVPYITTMQAAIAAAAAIETMKKGEELTIKSINEYHKEMEN.

The segment at 1–399 is carboxyphosphate synthetic domain; sequence MPKREDIKKV…SLLKAFKSLD (399 aa). Residues R129, R169, G175, G176, E208, V210, E215, G241, V242, H243, Q284, and E296 each coordinate ATP. One can recognise an ATP-grasp 1 domain in the interval 133–325; it reads KETMLRIGEK…IARVTAKIAI (193 aa). 3 residues coordinate Mg(2+): Q284, E296, and N298. Residues Q284, E296, and N298 each contribute to the Mn(2+) site. An oligomerization domain region spans residues 400 to 540; sequence IDNQLGNKHW…YSTYEDSCET (141 aa). The carbamoyl phosphate synthetic domain stretch occupies residues 541-932; that stretch reads NATTDKKKIL…YKAELAADNV (392 aa). An ATP-grasp 2 domain is found at 673 to 864; the sequence is YILMKELGVP…LAKIAAKVIA (192 aa). R709, D748, L750, E755, G780, V781, H782, S783, Q823, and E835 together coordinate ATP. Residues Q823, E835, and N837 each coordinate Mg(2+). 3 residues coordinate Mn(2+): Q823, E835, and N837. One can recognise an MGS-like domain in the interval 931–1071; that stretch reads NVLPLTGKVF…INEYHKEMEN (141 aa). The allosteric domain stretch occupies residues 933 to 1071; sequence LPLTGKVFLS…INEYHKEMEN (139 aa).

This sequence belongs to the CarB family. Composed of two chains; the small (or glutamine) chain promotes the hydrolysis of glutamine to ammonia, which is used by the large (or ammonia) chain to synthesize carbamoyl phosphate. Tetramer of heterodimers (alpha,beta)4. Mg(2+) is required as a cofactor. The cofactor is Mn(2+).

It catalyses the reaction hydrogencarbonate + L-glutamine + 2 ATP + H2O = carbamoyl phosphate + L-glutamate + 2 ADP + phosphate + 2 H(+). The enzyme catalyses hydrogencarbonate + NH4(+) + 2 ATP = carbamoyl phosphate + 2 ADP + phosphate + 2 H(+). The protein operates within amino-acid biosynthesis; L-arginine biosynthesis; carbamoyl phosphate from bicarbonate: step 1/1. It functions in the pathway pyrimidine metabolism; UMP biosynthesis via de novo pathway; (S)-dihydroorotate from bicarbonate: step 1/3. Its function is as follows. Large subunit of the glutamine-dependent carbamoyl phosphate synthetase (CPSase). CPSase catalyzes the formation of carbamoyl phosphate from the ammonia moiety of glutamine, carbonate, and phosphate donated by ATP, constituting the first step of 2 biosynthetic pathways, one leading to arginine and/or urea and the other to pyrimidine nucleotides. The large subunit (synthetase) binds the substrates ammonia (free or transferred from glutamine from the small subunit), hydrogencarbonate and ATP and carries out an ATP-coupled ligase reaction, activating hydrogencarbonate by forming carboxy phosphate which reacts with ammonia to form carbamoyl phosphate. This Methanosarcina barkeri (strain Fusaro / DSM 804) protein is Carbamoyl phosphate synthase large chain.